A 397-amino-acid polypeptide reads, in one-letter code: Enoyl-[acyl-carrier-protein] reductase [NADH] (397 aa).

NAD(+) is bound by residues 48 to 53, 74 to 75, 111 to 112, and 139 to 140; these read GASTGY, FE, DA, and VA. Residue Y225 participates in substrate binding. The Proton donor role is filled by Y235. Residues K244 and 273-275 each bind NAD(+); that span reads VVT.

This sequence belongs to the TER reductase family. In terms of assembly, monomer.

The enzyme catalyses a 2,3-saturated acyl-[ACP] + NAD(+) = a (2E)-enoyl-[ACP] + NADH + H(+). The protein operates within lipid metabolism; fatty acid biosynthesis. In terms of biological role, involved in the final reduction of the elongation cycle of fatty acid synthesis (FAS II). Catalyzes the reduction of a carbon-carbon double bond in an enoyl moiety that is covalently linked to an acyl carrier protein (ACP). The sequence is that of Enoyl-[acyl-carrier-protein] reductase [NADH] from Burkholderia pseudomallei (strain 668).